The chain runs to 214 residues: Cytochrome b (214 aa).

A run of 4 helical transmembrane segments spans residues 31–51, 75–96, 111–131, and 176–196; these read FGSM…FLAF, WIMQ…YIHI, WVSG…GYVL, and FFAL…IHIL. The heme b site is built by histidine 81 and histidine 95. Heme b is bound by residues histidine 180 and histidine 194. A ubiquinone is bound at residue histidine 199.

This sequence belongs to the cytochrome b family. As to quaternary structure, the cytochrome bc1 complex contains 3 respiratory subunits (MT-CYB, CYC1 and UQCRFS1), 2 core proteins (UQCRC1 and UQCRC2) and probably 6 low-molecular weight proteins. Requires heme b as cofactor.

Its subcellular location is the mitochondrion inner membrane. Its function is as follows. Component of the ubiquinol-cytochrome c reductase complex (complex III or cytochrome b-c1 complex) that is part of the mitochondrial respiratory chain. The b-c1 complex mediates electron transfer from ubiquinol to cytochrome c. Contributes to the generation of a proton gradient across the mitochondrial membrane that is then used for ATP synthesis. This is Cytochrome b (MT-CYB) from Gloydius blomhoffii (Mamushi).